The primary structure comprises 193 residues: MAKKQSILSPIIRITFTFLVLCGLVYPLIVTGIAQAVMKDNADGSLIYNDKNEVIGSKLIGQNFTDPRYFHGRVSSIEYKAEASGSNNYAPSNPDLEKRVEKSIEEWKKQNPTVPVTEVPIDLVTNSGSGLDPDISPKAASVQVERISKITNIPKETLNQLIKDQTEGAALGLFGETRVNVLKLNLELQKLLK.

A helical membrane pass occupies residues 14-34; that stretch reads ITFTFLVLCGLVYPLIVTGIA.

It belongs to the KdpC family. The system is composed of three essential subunits: KdpA, KdpB and KdpC.

The protein resides in the cell membrane. In terms of biological role, part of the high-affinity ATP-driven potassium transport (or Kdp) system, which catalyzes the hydrolysis of ATP coupled with the electrogenic transport of potassium into the cytoplasm. This subunit acts as a catalytic chaperone that increases the ATP-binding affinity of the ATP-hydrolyzing subunit KdpB by the formation of a transient KdpB/KdpC/ATP ternary complex. The sequence is that of Potassium-transporting ATPase KdpC subunit from Bacillus cereus (strain ATCC 10987 / NRS 248).